A 379-amino-acid polypeptide reads, in one-letter code: Cobalt-precorrin-5B C(1)-methyltransferase (379 aa).

This sequence belongs to the CbiD family.

The catalysed reaction is Co-precorrin-5B + S-adenosyl-L-methionine = Co-precorrin-6A + S-adenosyl-L-homocysteine. Its pathway is cofactor biosynthesis; adenosylcobalamin biosynthesis; cob(II)yrinate a,c-diamide from sirohydrochlorin (anaerobic route): step 6/10. Its function is as follows. Catalyzes the methylation of C-1 in cobalt-precorrin-5B to form cobalt-precorrin-6A. In Salmonella paratyphi A (strain ATCC 9150 / SARB42), this protein is Cobalt-precorrin-5B C(1)-methyltransferase.